Consider the following 512-residue polypeptide: Gasdermin-E (512 aa).

Positions 1–56 (MFAKATRNFLKEVDAGGDLISVSHLNDSDKLQLLSLVTKKKRYWCWQRPKYQILSA) are membrane targeting domain. An S-(2-succinyl)cysteine modification is found at cysteine 45. Lysine 120 participates in a covalent cross-link: Glycyl lysine isopeptide (Lys-Gly) (interchain with G-Cter in ubiquitin). 3 positions are modified to S-(2-succinyl)cysteine: cysteine 156, cysteine 168, and cysteine 180. A Glycyl lysine isopeptide (Lys-Gly) (interchain with G-Cter in ubiquitin) cross-link involves residue lysine 189. 3 positions are modified to S-(2-succinyl)cysteine: cysteine 235, cysteine 411, and cysteine 420.

Belongs to the gasdermin family. Homooligomer; homooligomeric ring-shaped pore complex containing 27-28 subunits when inserted in the membrane. Post-translationally, cleavage at Asp-270 by CASP3 (mature and uncleaved precursor forms) or granzyme B (GZMB) relieves autoinhibition and is sufficient to initiate pyroptosis. Succination by the Krebs cycle intermediate fumarate, which leads to S-(2-succinyl)cysteine residues, inhibits processing by caspases, and ability to initiate pyroptosis. Succination modification is catalyzed by a non-enzymatic reaction caused by an accumulation of fumarate. In terms of processing, ubiquitinated on Lys-120 and Lys-189 via 'Lys-48'-linked polyubiquitin chains, leading to proteasomal degradation. Deubiquitinated by USP48, leading to increased stability. Post-translationally, palmitoylated. As to expression, expressed in spleen, kidney, large and small intestine, testicle, stomach and by CD4(+)CD(8+) T cells in thymus. Expressed by macrophages.

Its subcellular location is the cell membrane. The protein localises to the cytoplasm. It localises to the cytosol. With respect to regulation, the full-length protein before cleavage is inactive: intramolecular interactions between N- and C-terminal domains mediate autoinhibition in the absence of activation signal. The intrinsic pyroptosis-inducing activity is carried by the released N-terminal moiety (Gasdermin-E, N-terminal) following cleavage by CASP3 or granzyme B (GZMB). Activated by NLRP1 in the absence of GSDMD expression: NLRP1 cleaves and activates CASP8, promoting downstream activation of CASP3 and subsequent activation of GSDME. Its function is as follows. Precursor of a pore-forming protein that converts non-inflammatory apoptosis to pyroptosis. This form constitutes the precursor of the pore-forming protein: upon cleavage, the released N-terminal moiety (Gasdermin-E, N-terminal) binds to membranes and forms pores, triggering pyroptosis. In terms of biological role, pore-forming protein produced by cleavage by CASP3 or granzyme B (GZMB), which converts non-inflammatory apoptosis to pyroptosis or promotes granzyme-mediated pyroptosis, respectively. After cleavage, moves to the plasma membrane, homooligomerizes within the membrane and forms pores of 10-15 nanometers (nm) of inner diameter, allowing the release of mature interleukins (IL1B and IL16) and triggering pyroptosis. Binds to inner leaflet lipids, bisphosphorylated phosphatidylinositols, such as phosphatidylinositol (4,5)-bisphosphate. Cleavage by CASP3 switches CASP3-mediated apoptosis induced by TNF or danger signals, such as chemotherapy drugs, to pyroptosis. Mediates secondary necrosis downstream of the mitochondrial apoptotic pathway and CASP3 activation as well as in response to viral agents. Exhibits bactericidal activity. Cleavage by GZMB promotes tumor suppressor activity by triggering robust anti-tumor immunity. Suppresses tumors by mediating granzyme-mediated pyroptosis in target cells of natural killer (NK) cells: cleavage by granzyme B (GZMB), delivered to target cells from NK-cells, triggers pyroptosis of tumor cells and tumor suppression. May play a role in the p53/TP53-regulated cellular response to DNA damage. The polypeptide is Gasdermin-E (Mus musculus (Mouse)).